We begin with the raw amino-acid sequence, 404 residues long: Glycosylated lysosomal membrane protein (404 aa).

Positions 1 to 35 (MRGSVERGWGWGHCASSPLLLWTLLLFAAPFGLLG) are cleaved as a signal peptide. Topologically, residues 36-371 (EKTRQLSLEV…GRLVPTSPGH (336 aa)) are lumenal. 5 N-linked (GlcNAc...) asparagine glycosylation sites follow: Asn-65, Asn-134, Asn-159, Asn-186, and Asn-229. The chain crosses the membrane as a helical span at residues 372 to 392 (HGSALGAPGLMLLGGGLVLLL). Residues 393-404 (HHRKYSEYQSIN) are Cytoplasmic-facing. A Lysosomal targeting motif motif is present at residues 400–404 (YQSIN).

The protein belongs to the GLMP family. As to quaternary structure, interacts (via lumenal domain) with lysosomal protein MFSD1; the interaction starts while both proteins are still in the endoplasmic reticulum and is required for stabilization of MFSD1 in lysosomes but has no direct effect on its targeting to lysosomes or transporter activity. In terms of processing, highly N-glycosylated. N-glycosylation is essential for GLMP stability and for MFSD1 lysosomal localization.

The protein resides in the lysosome membrane. Functionally, required to protect lysosomal transporter MFSD1 from lysosomal proteolysis and for MFSD1 lysosomal localization. The chain is Glycosylated lysosomal membrane protein from Pongo abelii (Sumatran orangutan).